Reading from the N-terminus, the 197-residue chain is Cytochrome c-L (197 aa).

A signal peptide spans 1-25 (MMNRVKIGTALLGLTLAGIALPALA). Heme c is bound by residues cysteine 90, cysteine 93, and histidine 94.

Binds 1 heme c group covalently per subunit.

The protein localises to the periplasm. Electron acceptor for MDH. Acts in methanol oxidation. The chain is Cytochrome c-L (moxG) from Methylorubrum extorquens (strain ATCC 14718 / DSM 1338 / JCM 2805 / NCIMB 9133 / AM1) (Methylobacterium extorquens).